The sequence spans 48 residues: MAKFEEAENRMFNIKICLKCNARNPATAKSCRKCGYTGLRFKAKEPRG.

The protein belongs to the eukaryotic ribosomal protein eL40 family.

This is Large ribosomal subunit protein eL40 from Methanosphaera stadtmanae (strain ATCC 43021 / DSM 3091 / JCM 11832 / MCB-3).